The sequence spans 454 residues: Bifunctional protein GlmU (454 aa).

The interval 1 to 225 (MNIVILAAGM…IWETLGVNSK (225 aa)) is pyrophosphorylase. UDP-N-acetyl-alpha-D-glucosamine-binding positions include 6-9 (LAAG), Lys-20, Gln-71, 76-77 (GT), 98-100 (YGD), Gly-135, Glu-150, Asn-165, and Asn-223. Residue Asp-100 coordinates Mg(2+). Mg(2+) is bound at residue Asn-223. Positions 226–246 (LQLAEVERIHQGNQARRLLEA) are linker. An N-acetyltransferase region spans residues 247–454 (GVTLLDPARI…WQRPVKQPKK (208 aa)). Positions 329 and 347 each coordinate UDP-N-acetyl-alpha-D-glucosamine. His-359 functions as the Proton acceptor in the catalytic mechanism. UDP-N-acetyl-alpha-D-glucosamine-binding residues include Tyr-362 and Asn-373. Acetyl-CoA-binding positions include Ala-376, 382 to 383 (NY), Ser-401, Ala-419, and Arg-436.

It in the N-terminal section; belongs to the N-acetylglucosamine-1-phosphate uridyltransferase family. The protein in the C-terminal section; belongs to the transferase hexapeptide repeat family. As to quaternary structure, homotrimer. The cofactor is Mg(2+).

It is found in the cytoplasm. The enzyme catalyses alpha-D-glucosamine 1-phosphate + acetyl-CoA = N-acetyl-alpha-D-glucosamine 1-phosphate + CoA + H(+). The catalysed reaction is N-acetyl-alpha-D-glucosamine 1-phosphate + UTP + H(+) = UDP-N-acetyl-alpha-D-glucosamine + diphosphate. Its pathway is nucleotide-sugar biosynthesis; UDP-N-acetyl-alpha-D-glucosamine biosynthesis; N-acetyl-alpha-D-glucosamine 1-phosphate from alpha-D-glucosamine 6-phosphate (route II): step 2/2. The protein operates within nucleotide-sugar biosynthesis; UDP-N-acetyl-alpha-D-glucosamine biosynthesis; UDP-N-acetyl-alpha-D-glucosamine from N-acetyl-alpha-D-glucosamine 1-phosphate: step 1/1. It participates in bacterial outer membrane biogenesis; LPS lipid A biosynthesis. In terms of biological role, catalyzes the last two sequential reactions in the de novo biosynthetic pathway for UDP-N-acetylglucosamine (UDP-GlcNAc). The C-terminal domain catalyzes the transfer of acetyl group from acetyl coenzyme A to glucosamine-1-phosphate (GlcN-1-P) to produce N-acetylglucosamine-1-phosphate (GlcNAc-1-P), which is converted into UDP-GlcNAc by the transfer of uridine 5-monophosphate (from uridine 5-triphosphate), a reaction catalyzed by the N-terminal domain. The polypeptide is Bifunctional protein GlmU (Cupriavidus necator (strain ATCC 17699 / DSM 428 / KCTC 22496 / NCIMB 10442 / H16 / Stanier 337) (Ralstonia eutropha)).